A 369-amino-acid chain; its full sequence is Glycerol-3-phosphate dehydrogenase [NAD(P)+] (369 aa).

Positions 6, 7, 27, 28, and 101 each coordinate NADPH. Sn-glycerol 3-phosphate-binding residues include lysine 101 and glycine 131. Residue alanine 135 participates in NADPH binding. Positions 186, 239, 249, 250, and 251 each coordinate sn-glycerol 3-phosphate. Lysine 186 acts as the Proton acceptor in catalysis. Arginine 250 is an NADPH binding site. Glutamate 276 is a binding site for NADPH. A disordered region spans residues lysine 312–proline 369. 2 stretches are compositionally biased toward basic and acidic residues: residues glutamine 325 to aspartate 336 and arginine 352 to proline 369.

The protein belongs to the NAD-dependent glycerol-3-phosphate dehydrogenase family.

It localises to the cytoplasm. The catalysed reaction is sn-glycerol 3-phosphate + NAD(+) = dihydroxyacetone phosphate + NADH + H(+). It carries out the reaction sn-glycerol 3-phosphate + NADP(+) = dihydroxyacetone phosphate + NADPH + H(+). It participates in membrane lipid metabolism; glycerophospholipid metabolism. In terms of biological role, catalyzes the reduction of the glycolytic intermediate dihydroxyacetone phosphate (DHAP) to sn-glycerol 3-phosphate (G3P), the key precursor for phospholipid synthesis. This is Glycerol-3-phosphate dehydrogenase [NAD(P)+] from Leifsonia xyli subsp. xyli (strain CTCB07).